A 635-amino-acid polypeptide reads, in one-letter code: Replication factor C small subunit (635 aa).

51 to 58 (GPPGTGKT) contributes to the ATP binding site.

It belongs to the activator 1 small subunits family. RfcS subfamily. As to quaternary structure, heteromultimer composed of small subunits (RfcS) and large subunits (RfcL). In terms of processing, this protein undergoes a protein self splicing that involves a post-translational excision of the intervening region (intein) followed by peptide ligation.

Part of the RFC clamp loader complex which loads the PCNA sliding clamp onto DNA. This chain is Replication factor C small subunit (rfcS), found in Methanopyrus kandleri (strain AV19 / DSM 6324 / JCM 9639 / NBRC 100938).